Consider the following 288-residue polypeptide: Fatty acid-binding protein TM_1468 (288 aa).

Residues 3 to 283 enclose the DegV domain; it reads VKILVDSTAD…PGTVGFGIEV (281 aa). Residues threonine 63 and serine 96 each coordinate hexadecanoate.

As to quaternary structure, monomer.

Its function is as follows. Binds long-chain fatty acids, such as palmitate, and may play a role in lipid transport or fatty acid metabolism. The sequence is that of Fatty acid-binding protein TM_1468 from Thermotoga maritima (strain ATCC 43589 / DSM 3109 / JCM 10099 / NBRC 100826 / MSB8).